Here is a 132-residue protein sequence, read N- to C-terminus: uncharacterized protein (132 aa).

The signal sequence occupies residues 1–35; the sequence is MSFEYRHYKREAKICTCRGGWAHVLLCIGVSQGAC. The tract at residues 91–132 is disordered; the sequence is AHPGSHSDQPPGVPSRRKSRLERWSPSVSRSTSPPTEAPFCL. A compositionally biased stretch (low complexity) spans 115 to 125; the sequence is SPSVSRSTSPP.

It localises to the secreted. This is an uncharacterized protein from Homo sapiens (Human).